The following is a 188-amino-acid chain: Fructose-1-phosphate phosphatase YqaB (188 aa).

Asp-11 (nucleophile) is an active-site residue. Mg(2+) contacts are provided by Asp-11, Asp-13, and Asp-167. 11–13 is a binding site for substrate; the sequence is DMD.

It belongs to the HAD-like hydrolase superfamily. CbbY/CbbZ/Gph/YieH family. Mg(2+) serves as cofactor. Mn(2+) is required as a cofactor. The cofactor is Co(2+). Requires Zn(2+) as cofactor.

Catalyzes strongly the dephosphorylation of fructose-1-phosphate (Fru1P) and slightly the dephosphorylation of 6-phosphogluconate (6P-Glu). It has low beta-phosphoglucomutase activity. The protein is Fructose-1-phosphate phosphatase YqaB (yqaB) of Escherichia coli (strain K12).